The sequence spans 310 residues: p-hydroxybenzoic acid efflux pump subunit AaeA (310 aa).

Residues 12–32 (AITVVLVILAFIAIFNAWVYY) traverse the membrane as a helical segment.

It belongs to the membrane fusion protein (MFP) (TC 8.A.1) family.

It localises to the cell inner membrane. Functionally, forms an efflux pump with AaeB. This Escherichia coli O9:H4 (strain HS) protein is p-hydroxybenzoic acid efflux pump subunit AaeA.